We begin with the raw amino-acid sequence, 284 residues long: Ribose-phosphate pyrophosphokinase 1 (284 aa).

ATP is bound at residue 34-36 (DGE). Residues H126 and D163 each contribute to the Mg(2+) site. K186 is an active-site residue. Residues R188, D211, and 215–219 (STGGT) contribute to the D-ribose 5-phosphate site.

The protein belongs to the ribose-phosphate pyrophosphokinase family. Class III (archaeal) subfamily. It depends on Mg(2+) as a cofactor.

The protein localises to the cytoplasm. The enzyme catalyses D-ribose 5-phosphate + ATP = 5-phospho-alpha-D-ribose 1-diphosphate + AMP + H(+). It participates in metabolic intermediate biosynthesis; 5-phospho-alpha-D-ribose 1-diphosphate biosynthesis; 5-phospho-alpha-D-ribose 1-diphosphate from D-ribose 5-phosphate (route I): step 1/1. In terms of biological role, involved in the biosynthesis of the central metabolite phospho-alpha-D-ribosyl-1-pyrophosphate (PRPP) via the transfer of pyrophosphoryl group from ATP to 1-hydroxyl of ribose-5-phosphate (Rib-5-P). In Archaeoglobus fulgidus (strain ATCC 49558 / DSM 4304 / JCM 9628 / NBRC 100126 / VC-16), this protein is Ribose-phosphate pyrophosphokinase 1.